The primary structure comprises 88 residues: MANSKSAKKRALQSEKRRQHNASRRSMLRTYVKKVIAAIKSGDHKAATEAFAAAQPIVDRMATKGLIHKNKAARQKARLNTKIKALAA.

Positions Met1 to Met27 are disordered.

This sequence belongs to the bacterial ribosomal protein bS20 family.

In terms of biological role, binds directly to 16S ribosomal RNA. This chain is Small ribosomal subunit protein bS20, found in Shewanella denitrificans (strain OS217 / ATCC BAA-1090 / DSM 15013).